Here is a 1529-residue protein sequence, read N- to C-terminus: Ras guanine nucleotide exchange factor B (1529 aa).

The stretch at 135 to 186 forms a coiled coil; sequence ISNIEKQLSNLVNLKSNTTEQTDRKYKTNLIDFKESIIQLEKDCKNLLKQSN. 5 disordered regions span residues 290–357, 576–600, 680–724, 847–948, and 1168–1206; these read INTL…ISIN, TTTT…KSSH, KRNT…HIQQ, MGKE…NHNR, and QPPQ…STNL. 3 stretches are compositionally biased toward low complexity: residues 576–591, 683–724, and 853–887; these read TTTT…TTTN, TSSG…HIQQ, and NSNT…NNNE. Coiled coils occupy residues 722–798 and 871–898; these read IQQI…LNRK and NNNN…ETNK. Residues 888–898 are compositionally biased toward basic and acidic residues; that stretch reads NKNENKNETNK. Composition is skewed to low complexity over residues 906-916, 924-940, 1168-1187, and 1197-1206; these read SSTSTLSSSTT, SSTN…LLPP, QPPQ…TTQP, and QPQLQQSTNL. An N-terminal Ras-GEF domain is found at 1075–1205; sequence FYRSIKYASL…PQPQLQQSTN (131 aa). In terms of domain architecture, Ras-GEF spans 1282-1517; the sequence is SSTDIAEQLT…YEQSILLEPK (236 aa).

The protein resides in the cytoplasm. Promotes the exchange of Ras-bound GDP by GTP. Involved in phagocytosis, fluid-phase endocytosis, regulation of macropinocytosis and control of cell movement. The polypeptide is Ras guanine nucleotide exchange factor B (gefB) (Dictyostelium discoideum (Social amoeba)).